Here is a 494-residue protein sequence, read N- to C-terminus: UPF0371 protein spr0309 (494 aa).

This sequence belongs to the UPF0371 family.

The protein is UPF0371 protein spr0309 of Streptococcus pneumoniae (strain ATCC BAA-255 / R6).